Consider the following 401-residue polypeptide: Exodeoxyribonuclease 7 large subunit (401 aa).

This sequence belongs to the XseA family. Heterooligomer composed of large and small subunits.

The protein resides in the cytoplasm. The catalysed reaction is Exonucleolytic cleavage in either 5'- to 3'- or 3'- to 5'-direction to yield nucleoside 5'-phosphates.. Its function is as follows. Bidirectionally degrades single-stranded DNA into large acid-insoluble oligonucleotides, which are then degraded further into small acid-soluble oligonucleotides. This is Exodeoxyribonuclease 7 large subunit from Syntrophotalea carbinolica (strain DSM 2380 / NBRC 103641 / GraBd1) (Pelobacter carbinolicus).